The following is a 180-amino-acid chain: MAARLREHYQTKTVPALTKEFSYKNVMAVPKLEKITINIGMGEATQNAKLMDGAVNELGQIAGQKPVITKATKSIAQFKLREGQAIGCMVTLRGDRMFEFFDRLVNVALPRVRDFRGVSSKSFDGRGNYTLGIKDQLIFPEIDYSKVDKTKGMNICITTTARTDAEGLALLRTMGMPFRQ.

The protein belongs to the universal ribosomal protein uL5 family. Part of the 50S ribosomal subunit; part of the 5S rRNA/L5/L18/L25 subcomplex. Contacts the 5S rRNA and the P site tRNA. Forms a bridge to the 30S subunit in the 70S ribosome.

This is one of the proteins that bind and probably mediate the attachment of the 5S RNA into the large ribosomal subunit, where it forms part of the central protuberance. In the 70S ribosome it contacts protein S13 of the 30S subunit (bridge B1b), connecting the 2 subunits; this bridge is implicated in subunit movement. Contacts the P site tRNA; the 5S rRNA and some of its associated proteins might help stabilize positioning of ribosome-bound tRNAs. The sequence is that of Large ribosomal subunit protein uL5 from Solibacter usitatus (strain Ellin6076).